A 242-amino-acid chain; its full sequence is uncharacterized protein (242 aa).

The Response regulatory domain occupies 3 to 116 (TALVIDDEPF…RLRKTVKRLS (114 aa)). At Asp-54 the chain carries 4-aspartylphosphate. Residues 139–240 (IPCIGHNRIV…LKLLKEMLGL (102 aa)) form the HTH LytTR-type domain.

This is an uncharacterized protein from Vibrio vulnificus (strain CMCP6).